A 263-amino-acid polypeptide reads, in one-letter code: TPR repeat-containing protein DDB_G0285095 (263 aa).

The span at 1-25 (MGCCGSKEKYNGEDVPKSQRLENRP) shows a compositional bias: basic and acidic residues. The tract at residues 1–62 (MGCCGSKEKY…ASASQQNNPT (62 aa)) is disordered. TPR repeat units follow at residues 87–120 (SDLLAQYGVLLSMEGKNKEAEESLRKAVEVDTDN), 121–154 (SRAWQAYGEFLERTNNPKKAKEVYGEAYKHAAPK), and 162–195 (SSLLLSYAIFIQKSGEIDKAEKLYKRIVTSGARS).

The chain is TPR repeat-containing protein DDB_G0285095 from Dictyostelium discoideum (Social amoeba).